The sequence spans 661 residues: Transketolase (661 aa).

Position 30 (His30) interacts with substrate. Thiamine diphosphate-binding positions include His70 and 118–120 (GPL). A disordered region spans residues 99 to 118 (STTPGHPEFRDTPGVEATTG). Asp159 serves as a coordination point for Mg(2+). Residues Gly160 and Asn189 each contribute to the thiamine diphosphate site. The Mg(2+) site is built by Asn189 and Val191. His266, Arg357, and Ser384 together coordinate substrate. His266 is a thiamine diphosphate binding site. Residue Glu411 is the Proton donor of the active site. Position 437 (Phe437) interacts with thiamine diphosphate. Residues His461, Asp469, and Arg520 each coordinate substrate.

It belongs to the transketolase family. In terms of assembly, homodimer. Mg(2+) is required as a cofactor. The cofactor is Ca(2+). Requires Mn(2+) as cofactor. It depends on Co(2+) as a cofactor. Thiamine diphosphate serves as cofactor.

The enzyme catalyses D-sedoheptulose 7-phosphate + D-glyceraldehyde 3-phosphate = aldehydo-D-ribose 5-phosphate + D-xylulose 5-phosphate. Functionally, catalyzes the transfer of a two-carbon ketol group from a ketose donor to an aldose acceptor, via a covalent intermediate with the cofactor thiamine pyrophosphate. In Physarum polycephalum (Slime mold), this protein is Transketolase (tkt).